A 471-amino-acid polypeptide reads, in one-letter code: Proline--tRNA ligase (471 aa).

Belongs to the class-II aminoacyl-tRNA synthetase family. ProS type 3 subfamily. In terms of assembly, homodimer.

Its subcellular location is the cytoplasm. It carries out the reaction tRNA(Pro) + L-proline + ATP = L-prolyl-tRNA(Pro) + AMP + diphosphate. Its function is as follows. Catalyzes the attachment of proline to tRNA(Pro) in a two-step reaction: proline is first activated by ATP to form Pro-AMP and then transferred to the acceptor end of tRNA(Pro). The polypeptide is Proline--tRNA ligase (Archaeoglobus fulgidus (strain ATCC 49558 / DSM 4304 / JCM 9628 / NBRC 100126 / VC-16)).